The following is a 470-amino-acid chain: tRNA-2-methylthio-N(6)-dimethylallyladenosine synthase (470 aa).

In terms of domain architecture, MTTase N-terminal spans 5-122 (RKLYVKSFGC…LPELLAEAKA (118 aa)). Positions 14, 50, 85, 163, 167, and 170 each coordinate [4Fe-4S] cluster. The Radical SAM core domain maps to 149-383 (RSRGPAAFVT…LLEASKAAFD (235 aa)). The TRAM domain occupies 384 to 446 (ESCRGRTFDI…PNSLAGVPAE (63 aa)). The tract at residues 439–470 (SLAGVPAEASEPSVSQSPVSSARSRPLAAMEA) is disordered. Low complexity predominate over residues 444 to 464 (PAEASEPSVSQSPVSSARSRP).

It belongs to the methylthiotransferase family. MiaB subfamily. As to quaternary structure, monomer. The cofactor is [4Fe-4S] cluster.

The protein localises to the cytoplasm. It carries out the reaction N(6)-dimethylallyladenosine(37) in tRNA + (sulfur carrier)-SH + AH2 + 2 S-adenosyl-L-methionine = 2-methylsulfanyl-N(6)-dimethylallyladenosine(37) in tRNA + (sulfur carrier)-H + 5'-deoxyadenosine + L-methionine + A + S-adenosyl-L-homocysteine + 2 H(+). Its function is as follows. Catalyzes the methylthiolation of N6-(dimethylallyl)adenosine (i(6)A), leading to the formation of 2-methylthio-N6-(dimethylallyl)adenosine (ms(2)i(6)A) at position 37 in tRNAs that read codons beginning with uridine. The chain is tRNA-2-methylthio-N(6)-dimethylallyladenosine synthase from Xanthobacter autotrophicus (strain ATCC BAA-1158 / Py2).